We begin with the raw amino-acid sequence, 261 residues long: Hydroxyethylthiazole kinase (261 aa).

Position 38 (methionine 38) interacts with substrate. 2 residues coordinate ATP: arginine 114 and threonine 159. A substrate-binding site is contributed by glycine 186.

The protein belongs to the Thz kinase family. The cofactor is Mg(2+).

The enzyme catalyses 5-(2-hydroxyethyl)-4-methylthiazole + ATP = 4-methyl-5-(2-phosphooxyethyl)-thiazole + ADP + H(+). The protein operates within cofactor biosynthesis; thiamine diphosphate biosynthesis; 4-methyl-5-(2-phosphoethyl)-thiazole from 5-(2-hydroxyethyl)-4-methylthiazole: step 1/1. Its function is as follows. Catalyzes the phosphorylation of the hydroxyl group of 4-methyl-5-beta-hydroxyethylthiazole (THZ). This Streptococcus suis (strain 05ZYH33) protein is Hydroxyethylthiazole kinase.